A 283-amino-acid polypeptide reads, in one-letter code: MPELPEVETVCRGLNQLTFGQTIRGGKVLLPRTLAYPVSIEEFLEQINNATFGQWQRRGKYLLVPLEEKKGWLGVHLRMTGQLLWVKQNEPLSRHTRLRLFCDRSKELRFVDIRTFGKVWWVPPNQPPETIITGLQKLGLEPFSNAFSLDYFIDKLKGRQRNIKTILLDQSVVAGIGNIYADEALFKSGIRPTTLGKELSQPQVKRLREAMIEVLKTAIEEGGTTFSDFRGVTGINGNYSGVAWVYGRHNQPCRVCGTPIERIKLGGRSSHFCPQCQPLGNKK.

Proline 2 serves as the catalytic Schiff-base intermediate with DNA. Glutamate 3 acts as the Proton donor in catalysis. Residue lysine 60 is the Proton donor; for beta-elimination activity of the active site. Histidine 95, arginine 114, and arginine 159 together coordinate DNA. The FPG-type zinc-finger motif lies at 244 to 278 (WVYGRHNQPCRVCGTPIERIKLGGRSSHFCPQCQP). The Proton donor; for delta-elimination activity role is filled by arginine 268.

This sequence belongs to the FPG family. As to quaternary structure, monomer. Zn(2+) is required as a cofactor.

It catalyses the reaction Hydrolysis of DNA containing ring-opened 7-methylguanine residues, releasing 2,6-diamino-4-hydroxy-5-(N-methyl)formamidopyrimidine.. The enzyme catalyses 2'-deoxyribonucleotide-(2'-deoxyribose 5'-phosphate)-2'-deoxyribonucleotide-DNA = a 3'-end 2'-deoxyribonucleotide-(2,3-dehydro-2,3-deoxyribose 5'-phosphate)-DNA + a 5'-end 5'-phospho-2'-deoxyribonucleoside-DNA + H(+). Involved in base excision repair of DNA damaged by oxidation or by mutagenic agents. Acts as a DNA glycosylase that recognizes and removes damaged bases. Has a preference for oxidized purines, such as 7,8-dihydro-8-oxoguanine (8-oxoG). Has AP (apurinic/apyrimidinic) lyase activity and introduces nicks in the DNA strand. Cleaves the DNA backbone by beta-delta elimination to generate a single-strand break at the site of the removed base with both 3'- and 5'-phosphates. The polypeptide is Formamidopyrimidine-DNA glycosylase (Crocosphaera subtropica (strain ATCC 51142 / BH68) (Cyanothece sp. (strain ATCC 51142))).